We begin with the raw amino-acid sequence, 453 residues long: Serine incorporator 1 (453 aa).

Glycine 2 carries N-myristoyl glycine lipidation. Over 2–39 (GSVLGLCSMASWIPCLCGSAPCLLCRCCPSGNNSTVTR) the chain is Cytoplasmic. The chain crosses the membrane as a helical span at residues 40–60 (LIYALFLLVGVCVACVMLIPG). Residues 61-88 (MEEQLNKIPGFCENEKGMVPCNILVGYK) lie on the Lumenal side of the membrane. A helical transmembrane segment spans residues 89–109 (AVYRLCFGLAMFYLLLSLLMI). The Cytoplasmic segment spans residues 110-123 (KVKSSSDPRAAIHN). The helical transmembrane segment at 124-144 (GFWFFKFAAAIAIIIGAFFIP) threads the bilayer. Residues 145–151 (EGTFTTV) are Lumenal-facing. Residues 152–172 (WFYVGMAGAFCFILIQLVLLI) traverse the membrane as a helical segment. Over 173 to 197 (DFAHSWNESWVEKMEEGNSRCWYAA) the chain is Cytoplasmic. Residues 198-218 (LLSATALNYLLSLVAVVLFFV) form a helical membrane-spanning segment. The Lumenal portion of the chain corresponds to 219 to 231 (YYTHPASCAENKA). The chain crosses the membrane as a helical span at residues 232 to 252 (FISVNMLLCLGASIMSILPKI). Over 253-259 (QESQPRS) the chain is Cytoplasmic. A helical membrane pass occupies residues 260–280 (GLLQSSVITVYTMYLTWSAMT). At 281-309 (NEPETECNPSLLNIIGYNTTSTVSKEGQS) the chain is on the lumenal side. The chain crosses the membrane as a helical span at residues 310-330 (VQWWHTQGIIGLILFLLCVFY). Residues 331–387 (SSIRTSNNSQVNKLTLTSDESTLIEDGGARNDGSLEDGDDVHRAVDNERDGVTYSYS) are Cytoplasmic-facing. The residue at position 351 (serine 351) is a Phosphoserine. Threonine 352 carries the post-translational modification Phosphothreonine. Serine 364 carries the phosphoserine modification. A helical membrane pass occupies residues 388–408 (FFHFMLFLASLYIMMTLTNWY). Topologically, residues 409–426 (RYEPSREMKSQWTAVWVK) are lumenal. Residues 427–447 (ISSSWIGIVLYVWTLVAPLVL) traverse the membrane as a helical segment. Topologically, residues 448-453 (TNRDFD) are cytoplasmic.

Belongs to the TDE1 family. As to quaternary structure, interacts with SPTLC1.

The protein resides in the endoplasmic reticulum membrane. Enhances the incorporation of serine into phosphatidylserine and sphingolipids. The chain is Serine incorporator 1 (SERINC1) from Bos taurus (Bovine).